Here is a 356-residue protein sequence, read N- to C-terminus: MTTGRMSRRECLSAAVMVPIAAMTATATITGSAQAAKNNMNGSTIGKITKFSPRLDAILDVSTPIEVIASDIQWSEGPVWVKNGNFLLFSDPPANIMRKWTPDAGVSIFLKPSGHAEPIPAGQFREPGSNGMKVGPDGKIWVADSGTRAIMKVDPVTRQRSVVVDNYKGKRFNSPNDLFFSKSGAVYFTDPPYGLTNLDESDIKEMNYNGVFRLSPDGRLDLIEAGLSRPNGLALSPDETKLYVSNSDRASPNIWVYSLDSNGLPTSRTLLRNFRKEYFDQGLAGLPDGMNIDKQGNLFASAPGGIYIFAPDGECLGLISGNPGQPLSNCCFGEKGQTLFISASHNVVRVRTKTFG.

A signal peptide (tat-type signal) is located at residues 1–35; it reads MTTGRMSRRECLSAAVMVPIAAMTATATITGSAQA.

As to quaternary structure, homodimer. Post-translationally, predicted to be exported by the Tat system. The position of the signal peptide cleavage has been experimentally proven.

It localises to the periplasm. It catalyses the reaction D-glucono-1,5-lactone + H2O = D-gluconate + H(+). It functions in the pathway carbohydrate acid metabolism; D-gluconate biosynthesis; D-gluconate from D-glucono-1,5-lactone: step 1/1. Hydrolyzes the gluconolactone formed by glucose-fructose oxidoreductase, and that formed in aerobic conditions by the glucose dehydrogenase present. The protein is Gluconolactonase (gnl) of Zymomonas mobilis subsp. mobilis (strain ATCC 31821 / ZM4 / CP4).